The chain runs to 877 residues: Leucine--tRNA ligase (877 aa).

A 'HIGH' region motif is present at residues 43-53 (PYPSGRIHMGH). Positions 628 to 632 (KMSKS) match the 'KMSKS' region motif. K631 lines the ATP pocket.

Belongs to the class-I aminoacyl-tRNA synthetase family.

The protein resides in the cytoplasm. The catalysed reaction is tRNA(Leu) + L-leucine + ATP = L-leucyl-tRNA(Leu) + AMP + diphosphate. In Brucella abortus biovar 1 (strain 9-941), this protein is Leucine--tRNA ligase.